Consider the following 186-residue polypeptide: Large ribosomal subunit protein uL10 (186 aa).

It belongs to the universal ribosomal protein uL10 family. As to quaternary structure, part of the ribosomal stalk of the 50S ribosomal subunit. The N-terminus interacts with L11 and the large rRNA to form the base of the stalk. The C-terminus forms an elongated spine to which L12 dimers bind in a sequential fashion forming a multimeric L10(L12)X complex.

Functionally, forms part of the ribosomal stalk, playing a central role in the interaction of the ribosome with GTP-bound translation factors. The protein is Large ribosomal subunit protein uL10 (rplJ) of Streptomyces virginiae (Streptomyces cinnamonensis).